A 116-amino-acid chain; its full sequence is PTS system galactose-specific EIIA component (116 aa).

The 99-residue stretch at D11–R109 folds into the PTS EIIA type-3 domain. H85 acts as the Tele-phosphohistidine intermediate in catalysis. A Phosphohistidine; by HPr modification is found at H85. Mg(2+) is bound at residue D88.

Homotrimer. Mg(2+) serves as cofactor.

The phosphoenolpyruvate-dependent sugar phosphotransferase system (sugar PTS), a major carbohydrate active transport system, catalyzes the phosphorylation of incoming sugar substrates concomitantly with their translocation across the cell membrane. Involved in galactose transport with PtcB and Lmg_0963. This Lactococcus lactis subsp. cremoris (strain MG1363) protein is PTS system galactose-specific EIIA component.